The primary structure comprises 216 residues: Octanoyltransferase (216 aa).

The region spanning 31 to 205 (STTRDEVWLV…ELVTLLDYEQ (175 aa)) is the BPL/LPL catalytic domain. Residues 70–77 (RGGQVTYH), 137–139 (SLG), and 150–152 (GLA) contribute to the substrate site. Residue Cys-168 is the Acyl-thioester intermediate of the active site.

It belongs to the LipB family.

The protein localises to the cytoplasm. It catalyses the reaction octanoyl-[ACP] + L-lysyl-[protein] = N(6)-octanoyl-L-lysyl-[protein] + holo-[ACP] + H(+). Its pathway is protein modification; protein lipoylation via endogenous pathway; protein N(6)-(lipoyl)lysine from octanoyl-[acyl-carrier-protein]: step 1/2. Catalyzes the transfer of endogenously produced octanoic acid from octanoyl-acyl-carrier-protein onto the lipoyl domains of lipoate-dependent enzymes. Lipoyl-ACP can also act as a substrate although octanoyl-ACP is likely to be the physiological substrate. This Vibrio cholerae serotype O1 (strain ATCC 39541 / Classical Ogawa 395 / O395) protein is Octanoyltransferase.